The chain runs to 146 residues: Vascular endothelial growth factor A (146 aa).

A signal peptide spans Met-1–Ala-26. Disulfide bonds link Cys-51–Cys-93, Cys-82–Cys-127, and Cys-86–Cys-129. N-linked (GlcNAc...) asparagine glycosylation occurs at Asn-100.

Belongs to the PDGF/VEGF growth factor family. As to quaternary structure, homodimer; disulfide-linked. Also found as heterodimer with PGF. Interacts with NRP1. Interacts with isoform 2 of BSG. Interacts with CD82; this interaction inhibits VEGFA-mediated signaling pathway.

In terms of biological role, growth factor active in angiogenesis, vasculogenesis and endothelial cell growth. Induces endothelial cell proliferation, promotes cell migration, inhibits apoptosis and induces permeabilization of blood vessels. Binds to the FLT1/VEGFR1 and KDR/VEGFR2 receptors, heparan sulfate and heparin. Binding to NRP1 receptor initiates a signaling pathway needed for motor neuron axon guidance and cell body migration, including for the caudal migration of facial motor neurons from rhombomere 4 to rhombomere 6 during embryonic development. Also binds the DEAR/FBXW7-AS1 receptor. In Ovis aries (Sheep), this protein is Vascular endothelial growth factor A (VEGFA).